Here is a 180-residue protein sequence, read N- to C-terminus: Large ribosomal subunit protein uL5 (180 aa).

It belongs to the universal ribosomal protein uL5 family. As to quaternary structure, part of the 50S ribosomal subunit; part of the 5S rRNA/L5/L18/L25 subcomplex. Contacts the 5S rRNA and the P site tRNA. Forms a bridge to the 30S subunit in the 70S ribosome.

In terms of biological role, this is one of the proteins that bind and probably mediate the attachment of the 5S RNA into the large ribosomal subunit, where it forms part of the central protuberance. In the 70S ribosome it contacts protein S13 of the 30S subunit (bridge B1b), connecting the 2 subunits; this bridge is implicated in subunit movement. Contacts the P site tRNA; the 5S rRNA and some of its associated proteins might help stabilize positioning of ribosome-bound tRNAs. This chain is Large ribosomal subunit protein uL5, found in Roseiflexus sp. (strain RS-1).